Here is a 357-residue protein sequence, read N- to C-terminus: Peptide chain release factor 1 (357 aa).

Glutamine 236 is modified (N5-methylglutamine).

Belongs to the prokaryotic/mitochondrial release factor family. Methylated by PrmC. Methylation increases the termination efficiency of RF1.

The protein localises to the cytoplasm. In terms of biological role, peptide chain release factor 1 directs the termination of translation in response to the peptide chain termination codons UAG and UAA. The chain is Peptide chain release factor 1 (prfA) from Mycobacterium bovis (strain ATCC BAA-935 / AF2122/97).